A 324-amino-acid chain; its full sequence is Antihemorrhagic factor cHLP-A (324 aa).

The N-terminal stretch at 1-19 (MNSLVALVLLGQIIGSTLS) is a signal peptide. 2 consecutive Cystatin fetuin-A-type domains span residues 21–130 (QLGP…VKCK) and 141–254 (RNCP…SDCV). 6 disulfide bridges follow: Cys28–Cys315, Cys85–Cys96, Cys110–Cys129, Cys143–Cys146, Cys205–Cys217, and Cys230–Cys253. Asn204 carries an N-linked (GlcNAc...) asparagine glycan. An N-linked (GlcNAc...) asparagine glycan is attached at Asn282.

This sequence belongs to the fetuin family. As to quaternary structure, homodimer. As to expression, expressed by the liver.

It localises to the secreted. Its function is as follows. Potent inhibitor of hemorrhagic activity but also proteolytic activities. Inhibition occurs by formation of a non-covalent complex between this protein and the proteinases at their metalloproteinase domains. This Gloydius brevicauda (Korean slamosa snake) protein is Antihemorrhagic factor cHLP-A.